The sequence spans 248 residues: Protein UL24 homolog (248 aa).

The tract at residues 194–248 (DRPRPTAQGHRPRTHVGPKPSQLTARVPRSARAGRAGGRKGQVGAVGQVCPGAQK) is disordered. Over residues 218 to 227 (ARVPRSARAG) the composition is skewed to low complexity.

The protein belongs to the herpesviridae UL24 family.

Its subcellular location is the virion. It localises to the host cytoplasm. The protein resides in the host nucleus. It is found in the host nucleolus. The protein localises to the host Golgi apparatus. Its function is as follows. May participate in nuclear egress of viral particles. Plays a role in the dispersal of several host nucleolar proteins including NCL/nucleolin and NPM1. Since deletion of host NCL/nucleolin negatively impact on nuclear egress, UL24 supposedly acts on this process through its effect on host nucleoli. The sequence is that of Protein UL24 homolog from Homo sapiens (Human).